We begin with the raw amino-acid sequence, 167 residues long: Interferon gamma (167 aa).

A signal peptide spans 1–23; the sequence is MNYTGYLLAFQLCIILGSSSCYC. The residue at position 24 (glutamine 24) is a Pyrrolidone carboxylic acid. Asparagine 39 and asparagine 105 each carry an N-linked (GlcNAc...) asparagine glycan. Residues 148 to 167 are disordered; that stretch reads SNLRKRKRSQSTFHGRRASI. Residues 149–167 show a composition bias toward basic residues; sequence NLRKRKRSQSTFHGRRASI.

This sequence belongs to the type II (or gamma) interferon family. Homodimer. Interacts with IFNGR1 (via extracellular domain); this interaction promotes IFNGR1 dimerization. In terms of tissue distribution, released primarily from activated T lymphocytes.

It is found in the secreted. In terms of biological role, type II interferon produced by immune cells such as T-cells and NK cells that plays crucial roles in antimicrobial, antiviral, and antitumor responses by activating effector immune cells and enhancing antigen presentation. Primarily signals through the JAK-STAT pathway after interaction with its receptor IFNGR1 to affect gene regulation. Upon IFNG binding, IFNGR1 intracellular domain opens out to allow association of downstream signaling components JAK2, JAK1 and STAT1, leading to STAT1 activation, nuclear translocation and transcription of IFNG-regulated genes. Many of the induced genes are transcription factors such as IRF1 that are able to further drive regulation of a next wave of transcription. Plays a role in class I antigen presentation pathway by inducing a replacement of catalytic proteasome subunits with immunoproteasome subunits. In turn, increases the quantity, quality, and repertoire of peptides for class I MHC loading. Increases the efficiency of peptide generation also by inducing the expression of activator PA28 that associates with the proteasome and alters its proteolytic cleavage preference. Up-regulates as well MHC II complexes on the cell surface by promoting expression of several key molecules such as cathepsins B/CTSB, H/CTSH, and L/CTSL. Participates in the regulation of hematopoietic stem cells during development and under homeostatic conditions by affecting their development, quiescence, and differentiation. This Dasypus novemcinctus (Nine-banded armadillo) protein is Interferon gamma (IFNG).